Consider the following 113-residue polypeptide: U11-theraphotoxin-Hhn1a (113 aa).

A signal peptide spans 1–21 (MNTVRVTFLLVFVLAVSLGQA). Residues 22-74 (DKDENRMEMQEKTEQGESYLDFAENLLLQKLEELEAKLLEEDSEESRNSRQKR) constitute a propeptide that is removed on maturation. Disulfide bonds link cysteine 75–cysteine 90, cysteine 82–cysteine 95, and cysteine 89–cysteine 110.

Belongs to the neurotoxin 14 (magi-1) family. 01 (HNTX-16) subfamily. Expressed by the venom gland.

It is found in the secreted. Its function is as follows. Probable ion channel inhibitor. This chain is U11-theraphotoxin-Hhn1a, found in Cyriopagopus hainanus (Chinese bird spider).